A 307-amino-acid polypeptide reads, in one-letter code: Mitochondrial brown fat uncoupling protein 1 (307 aa).

Residues 1-10 lie on the Mitochondrial intermembrane side of the membrane; sequence MVSQTTSEVQ. The chain crosses the membrane as a helical span at residues 11–32; the sequence is PTMGVKIFSAGVAACLADIITF. Solcar repeat units follow at residues 11–102, 111–201, and 210–295; these read PTMG…VQEY, PTLV…MKGA, and DDVP…LKKE. The Mitochondrial matrix portion of the chain corresponds to 33 to 73; that stretch reads PLDTAKVRLQIQGEGQTSSTIRYKGVLGTITTLAKTEGLPK. Lys56 lines the fatty acid 16:0 pocket. Residues 74 to 96 traverse the membrane as a helical segment; the sequence is LYSGLPAGIQRQISFASLRIGLY. The Mitochondrial intermembrane segment spans residues 97 to 116; that stretch reads DTVQEYFSSGKETPPTLVNR. The helical transmembrane segment at 117 to 133 threads the bilayer; sequence ISAGLMTGGVAVFIGQP. At 134–178 the chain is on the mitochondrial matrix side; the sequence is TEVVKVRLQAQSHLHGIKPRYTGTYNAYRIIATTESLSTLWKGTT. The helical transmembrane segment at 179 to 195 threads the bilayer; that stretch reads PNLLRNVIINCTELVTY. The Mitochondrial intermembrane portion of the chain corresponds to 196-212; the sequence is DLMKGALVNNQILADDV. The chain crosses the membrane as a helical span at residues 213–232; sequence PCHLLSALVAGFCTTFLASP. At 233 to 266 the chain is on the mitochondrial matrix side; sequence ADVVKTRFINSLPGQYPSVPSCAMTMFTKEGPTA. Cys254 carries the cysteine sulfenic acid (-SOH) modification. The helical transmembrane segment at 267–289 threads the bilayer; that stretch reads FFKGFVPSFLRLASWNVIMFVCF. Lys269 provides a ligand contact to fatty acid 16:0. Residues 290 to 307 lie on the Mitochondrial intermembrane side of the membrane; sequence EQLKKELMKSRQTVDCTT.

This sequence belongs to the mitochondrial carrier (TC 2.A.29) family. Most probably functions as a monomer. Binds one purine nucleotide per monomer. However, has also been suggested to function as a homodimer or a homotetramer. Tightly associates with cardiolipin in the mitochondrion inner membrane; may stabilize and regulate its activity. Post-translationally, may undergo sulfenylation upon cold exposure. May increase the sensitivity of UCP1 thermogenic function to the activation by noradrenaline probably through structural effects. May undergo ubiquitin-mediated proteasomal degradation. As to expression, brown adipose tissue.

It localises to the mitochondrion inner membrane. The catalysed reaction is H(+)(in) = H(+)(out). With respect to regulation, has no constitutive proton transporter activity and has to be activated by long-chain fatty acids/LCFAs. Inhibited by purine nucleotides. Both purine nucleotides and LCFAs bind the cytosolic side of the transporter and directly compete to activate or inhibit it. Activated by noradrenaline and reactive oxygen species. Despite lacking canonical translational encoding for selenocysteine, a small pool of the protein has been observed to selectively incorporate selenocysteine at 'Cys-254'. Selenocysteine-modified protein is highly sensitive to redox modification and may constitute a pool of protein highly sensitive to activation by elevated levels of reactive oxygen species (ROS). Functionally, mitochondrial protein responsible for thermogenic respiration, a specialized capacity of brown adipose tissue and beige fat that participates in non-shivering adaptive thermogenesis to temperature and diet variations and more generally to the regulation of energy balance. Functions as a long-chain fatty acid/LCFA and proton symporter, simultaneously transporting one LCFA and one proton through the inner mitochondrial membrane. However, LCFAs remaining associated with the transporter via their hydrophobic tails, it results in an apparent transport of protons activated by LCFAs. Thereby, dissipates the mitochondrial proton gradient and converts the energy of substrate oxydation into heat instead of ATP. Regulates the production of reactive oxygen species/ROS by mitochondria. In Phodopus sungorus (Striped hairy-footed hamster), this protein is Mitochondrial brown fat uncoupling protein 1.